Here is a 591-residue protein sequence, read N- to C-terminus: Calnexin (591 aa).

The signal sequence occupies residues 1-20 (MEGKWLLCLLLVLGTAAVEA). The Lumenal segment spans residues 21-482 (HDGHDDDAID…QMLEAAEERP (462 aa)). Positions 75 and 118 each coordinate Ca(2+). Lysine 138 is modified (N6-acetyllysine). Cysteine 161 and cysteine 195 are oxidised to a cystine. Residues tyrosine 165, lysine 167, tyrosine 186, and aspartate 193 each coordinate an alpha-D-glucoside. The interval 261–347 (GNLLNDMTPP…EKPEDWDEDM (87 aa)) is disordered. A compositionally biased stretch (basic and acidic residues) spans 275 to 320 (REIEDPEDRKPEDWDERPKIADPDAVKPDDWDEDAPSKIPDEEATK). The interval 277–410 (IEDPEDRKPE…RKIPNPDFFE (134 aa)) is p domain (Extended arm). 5 tandem repeats follow at residues 279-291 (DPED…WDER), 296-308 (DPDA…WDED), 315-327 (DEEA…WLDD), 334-346 (DPDA…WDED), and 349-359 (GEWEAPQIANP). 2 4 X approximate repeats regions span residues 279 to 346 (DPED…WDED) and 349 to 406 (GEWE…IPNP). The segment covering 324 to 347 (WLDDEPEYIPDPDAEKPEDWDEDM) has biased composition (acidic residues). Residues 327–360 (DEPEYIPDPDAEKPEDWDEDMDGEWEAPQIANPK) are interaction with PPIB. The cysteines at positions 361 and 367 are disulfide-linked. Tandem repeats lie at residues 368–378 (GVWQRPMIDNP), 382–392 (GKWKPPMIDNP), and 396–406 (GIWKPRKIPNP). An an alpha-D-glucoside-binding site is contributed by glutamate 426. Aspartate 437 provides a ligand contact to Ca(2+). A helical membrane pass occupies residues 483–503 (WLWVVYILTVALPVFLVILFC). S-palmitoyl cysteine attachment occurs at residues cysteine 503 and cysteine 504. Over 504–591 (CSGKKQSNAM…SPRNRKPRRE (88 aa)) the chain is Cytoplasmic. Residues 504–591 (CSGKKQSNAM…SPRNRKPRRE (88 aa)) form a sufficient to mediate interaction with SGIP1 region. Over residues 514–539 (EYKKTDAPQPDVKDEEGKEEEKNKRD) the composition is skewed to basic and acidic residues. Positions 514–591 (EYKKTDAPQP…SPRNRKPRRE (78 aa)) are disordered. Residue serine 553 is modified to Phosphoserine. A compositionally biased stretch (acidic residues) spans 555–568 (AEEDGVTGSQDEED). Threonine 561 carries the post-translational modification Phosphothreonine. Residue serine 563 is modified to Phosphoserine; by MAPK3. Serine 582 is modified (phosphoserine).

It belongs to the calreticulin family. Interacts with MAPK3/ERK1. Interacts with KCNH2. Associates with ribosomes. The palmitoylated form interacts with the ribosome-translocon complex component SSR1, promoting efficient folding of glycoproteins. Interacts with SERPINA2P/SERPINA2 and with the S and Z variants of SERPINA1. Interacts with SGIP1; involved in negative regulation of endocytosis. Interacts with PPIB. Interacts with SMIM22. Interacts with TMX2. Interacts with TMEM35A/NACHO. Interacts with CHRNA7. Interacts with reticulophagy regulators RETREG2 and RETREG3. Interacts with DNM1L; may form part of a larger protein complex at the ER-mitochondrial interface during mitochondrial fission. Interacts with ADAM7. In terms of processing, phosphorylated at Ser-563 by MAPK3/ERK1. Phosphorylation by MAPK3/ERK1 increases its association with ribosomes. Palmitoylation by DHHC6 leads to the preferential localization to the perinuclear rough ER. It mediates the association of calnexin with the ribosome-translocon complex (RTC) which is required for efficient folding of glycosylated proteins. Post-translationally, ubiquitinated, leading to proteasomal degradation. Probably ubiquitinated by ZNRF4. Expressed in sperm (at protein level).

Its subcellular location is the endoplasmic reticulum membrane. The protein resides in the mitochondrion membrane. It localises to the melanosome membrane. Its function is as follows. Calcium-binding protein that interacts with newly synthesized monoglucosylated glycoproteins in the endoplasmic reticulum. It may act in assisting protein assembly and/or in the retention within the ER of unassembled protein subunits. It seems to play a major role in the quality control apparatus of the ER by the retention of incorrectly folded proteins. Associated with partial T-cell antigen receptor complexes that escape the ER of immature thymocytes, it may function as a signaling complex regulating thymocyte maturation. Additionally it may play a role in receptor-mediated endocytosis at the synapse. This chain is Calnexin (Canx), found in Mus musculus (Mouse).